The following is a 162-amino-acid chain: MFSVARTAIRGAARPAVRIARRGYAETASVDKLRLTLALPHQSIYNQKEVTQVNIPSTAGELGILANHVPTIQQLKPGVVEVIETNGETKSYFISGGFATVQPDSELSVNSIEAFQAEDFSPEAIKSLTAEAQKNAQSADEAVAAEAEIELEVLEALAHFAK.

A mitochondrion-targeting transit peptide spans 1 to 24; that stretch reads MFSVARTAIRGAARPAVRIARRGY.

In terms of assembly, F-type ATP synthases have 2 components, the catalytic core F(1) and the membrane-embedded component F(0), linked together by a central stalk and a peripheral stalk. The central stalk, also called rotor shaft, is often seen as part of F(1). The peripheral stalk is seen as part of F(0). F(0) contains the membrane channel next to the rotor. F-type ATP synthases form dimers but each monomer functions independently in ATP generation. The dimer consists of 17 different polypeptides: ATP1 (subunit alpha, 3 molecules per monomer, part of F(1)), ATP2 (subunit beta, 3 copies per monomer, part of F(1)), ATP3 (subunit gamma, part of the central stalk), ATP4 (subunit b, part of the peripheral stalk), ATP5/OSCP (subunit 5/OSCP, part of the peripheral stalk), ATP6 (subunit a, part of the peripheral stalk), ATP7 (subunit d, part of the peripheral stalk), ATP8 (subunit 8, part of the peripheral stalk), OLI1 (subunit c, part of the rotor, 10 molecules per monomer), ATP14 (subunit h, part of the peripheral stalk), ATP15 (subunit epsilon, part of the central stalk), ATP16 (subunit delta, part of the central stalk), ATP17 (subunit f, part of the peripheral stalk), ATP18 (subunit i/j, part of the peripheral stalk), ATP19 (subunit k, dimer-specific, at interface between monomers), ATP20 (subunit g, at interface between monomers), TIM11 (subunit e, at interface between monomers).

It is found in the mitochondrion inner membrane. Mitochondrial membrane ATP synthase (F(1)F(0) ATP synthase or Complex V) produces ATP from ADP in the presence of a proton gradient across the membrane which is generated by electron transport complexes of the respiratory chain. F-type ATP synthases consist of two structural domains, F(1) - containing the extramembraneous catalytic core, and F(0) - containing the membrane proton channel, linked together by a central stalk and a peripheral stalk. During catalysis, ATP synthesis in the catalytic domain of F(1) is coupled via a rotary mechanism of the central stalk subunits to proton translocation. Part of the complex F(1) domain and the central stalk which is part of the complex rotary element. Rotation of the central stalk against the surrounding alpha/ATP1(3)beta/ATP2(3) subunits leads to hydrolysis of ATP in three separate catalytic sites on the beta/ATP2 subunits. The chain is ATP synthase subunit delta, mitochondrial from Yarrowia lipolytica (strain CLIB 122 / E 150) (Yeast).